Reading from the N-terminus, the 306-residue chain is [methyl-Co(III) glycine betaine-specific corrinoid protein]--tetrahydrofolate methyltransferase (306 aa).

This sequence belongs to the MtrH family.

The catalysed reaction is methyl-Co(III)-[glycine betaine-specific corrinoid protein] + (6S)-5,6,7,8-tetrahydrofolate = Co(I)-[glycine betaine-specific corrinoid protein] + (6S)-5-methyl-5,6,7,8-tetrahydrofolate + H(+). Functionally, methyltransferase able to catalyze the transfer of a methyl group from methylcobalamin (methylCbl) to tetrahydrofolate (THF) in vitro, to generate methyl-THF and cob(I)alamin. In vivo, the methyl group probably comes from the adjacently encoded methylated corrinoid protein DSY3155. The methyl group may then be ultimately converted to carbon dioxide, and its oxidation would also provide reducing equivalents for anaerobic respiration. Thus, may function in the pathway that allows anaerobic methylotrophic growth of D.hafniense using glycine betaine. The protein is [methyl-Co(III) glycine betaine-specific corrinoid protein]--tetrahydrofolate methyltransferase of Desulfitobacterium hafniense (strain Y51).